Reading from the N-terminus, the 277-residue chain is Probable xyloglucan endotransglucosylase/hydrolase protein 11 (277 aa).

An N-terminal signal peptide occupies residues 1 to 24 (MRGSDQKILLMVMVVVAVVAAAQG). The GH16 domain occupies 32–209 (VTWGNNYYQT…PKQMPYIAKF (178 aa)). Residue Asn50 is glycosylated (N-linked (GlcNAc...) asparagine). Glu107 (nucleophile) is an active-site residue. Residues 123–125 (NTN) and 133–135 (GKD) contribute to the xyloglucan site. A glycan (N-linked (GlcNAc...) asparagine) is linked at Asn194. Intrachain disulfides connect Cys217/Cys227 and Cys260/Cys273. Arg265 contributes to the xyloglucan binding site.

The protein belongs to the glycosyl hydrolase 16 family. XTH group 1 subfamily. Contains at least one intrachain disulfide bond essential for its enzymatic activity.

Its subcellular location is the secreted. The protein localises to the cell wall. It is found in the extracellular space. It localises to the apoplast. It catalyses the reaction breaks a beta-(1-&gt;4) bond in the backbone of a xyloglucan and transfers the xyloglucanyl segment on to O-4 of the non-reducing terminal glucose residue of an acceptor, which can be a xyloglucan or an oligosaccharide of xyloglucan.. Functionally, may catalyze xyloglucan endohydrolysis (XEH) and/or endotransglycosylation (XET). Cleaves and religates xyloglucan polymers, an essential constituent of the primary cell wall, and thereby participates in cell wall construction of growing tissues. This Arabidopsis thaliana (Mouse-ear cress) protein is Probable xyloglucan endotransglucosylase/hydrolase protein 11 (XTH11).